The following is a 432-amino-acid chain: Phosphomethylpyrimidine synthase (432 aa).

Substrate is bound by residues asparagine 69, methionine 98, tyrosine 127, histidine 163, 185–187 (SRG), 226–229 (DACR), and glutamate 265. A Zn(2+)-binding site is contributed by histidine 269. Tyrosine 292 contributes to the substrate binding site. Zn(2+) is bound at residue histidine 333. [4Fe-4S] cluster is bound by residues cysteine 409, cysteine 412, and cysteine 416.

The protein belongs to the ThiC family. Requires [4Fe-4S] cluster as cofactor.

The catalysed reaction is 5-amino-1-(5-phospho-beta-D-ribosyl)imidazole + S-adenosyl-L-methionine = 4-amino-2-methyl-5-(phosphooxymethyl)pyrimidine + CO + 5'-deoxyadenosine + formate + L-methionine + 3 H(+). The protein operates within cofactor biosynthesis; thiamine diphosphate biosynthesis. Catalyzes the synthesis of the hydroxymethylpyrimidine phosphate (HMP-P) moiety of thiamine from aminoimidazole ribotide (AIR) in a radical S-adenosyl-L-methionine (SAM)-dependent reaction. The chain is Phosphomethylpyrimidine synthase from Pelotomaculum thermopropionicum (strain DSM 13744 / JCM 10971 / SI).